Consider the following 144-residue polypeptide: D-aminoacyl-tRNA deacylase (144 aa).

Residues 136-137 (GP) carry the Gly-cisPro motif, important for rejection of L-amino acids motif.

It belongs to the DTD family. In terms of assembly, homodimer.

The protein localises to the cytoplasm. It carries out the reaction glycyl-tRNA(Ala) + H2O = tRNA(Ala) + glycine + H(+). The enzyme catalyses a D-aminoacyl-tRNA + H2O = a tRNA + a D-alpha-amino acid + H(+). Functionally, an aminoacyl-tRNA editing enzyme that deacylates mischarged D-aminoacyl-tRNAs. Also deacylates mischarged glycyl-tRNA(Ala), protecting cells against glycine mischarging by AlaRS. Acts via tRNA-based rather than protein-based catalysis; rejects L-amino acids rather than detecting D-amino acids in the active site. By recycling D-aminoacyl-tRNA to D-amino acids and free tRNA molecules, this enzyme counteracts the toxicity associated with the formation of D-aminoacyl-tRNA entities in vivo and helps enforce protein L-homochirality. This Vibrio cholerae serotype O1 (strain ATCC 39541 / Classical Ogawa 395 / O395) protein is D-aminoacyl-tRNA deacylase.